Reading from the N-terminus, the 427-residue chain is Serine protease inhibitor 88Ea (427 aa).

The N-terminal stretch at 1–18 (MHILSISLMAVLPAIALA) is a signal peptide. Asparagine 224 carries N-linked (GlcNAc...) asparagine glycosylation.

The protein belongs to the serpin family. As to expression, expressed in nurse cells and oocytes. Expressed in wings.

Its subcellular location is the secreted. Its function is as follows. Serine protease inhibitor with activity toward trypsin. Negatively regulates the Toll signaling pathway and suppresses the expression of the antifungal peptide drosomycin. Its negative regulation of the Toll signaling pathway also results in the inhibition of the melanization immune response via the phenoloxidase (PPO1) cascade. Essential for unfolding and expansion of the wings after emergence from the pupal case. May regulate the Toll pathway by blocking the proteolysis of the Toll ligand spz. The sequence is that of Serine protease inhibitor 88Ea from Drosophila melanogaster (Fruit fly).